We begin with the raw amino-acid sequence, 314 residues long: Olfactory receptor-like protein I9 (314 aa).

The Extracellular segment spans residues 1-25 (MTRRNQTAISQFFLLGLPFPPEYQH). A glycan (N-linked (GlcNAc...) asparagine) is linked at N5. Residues 26–50 (LFYALFLAMYLTTLLGNLIIIILIL) traverse the membrane as a helical segment. Topologically, residues 51-57 (LDSHLHT) are cytoplasmic. Residues 58–79 (PMYLFLSNLSFADLCFSSVTMP) traverse the membrane as a helical segment. The Extracellular portion of the chain corresponds to 80 to 100 (KLLQNMQSQVPSIPYAGCLAQ). An intrachain disulfide couples C97 to C189. The helical transmembrane segment at 101-120 (IYFFLFFGDLGNFLLVAMAY) threads the bilayer. Residues 121–139 (DRYVAICFPLHYMSIMSPK) lie on the Cytoplasmic side of the membrane. The helical transmembrane segment at 140-158 (LCVSLVVLSWVLTTFHAML) threads the bilayer. Residues 159 to 196 (HTLLMARLSFCEDSVIPHYFCDMSTLLKVACSDTHDNE) are Extracellular-facing. Residues 197–219 (LAIFILGGPIVVLPFLLIIVSYA) form a helical membrane-spanning segment. Topologically, residues 220–236 (RIVSSIFKVPSSQSIHK) are cytoplasmic. A helical transmembrane segment spans residues 237 to 260 (AFSTCGSHLSVVSLFYGTVIGLYL). Residues 261-272 (CPSANNSTVKET) lie on the Extracellular side of the membrane. The chain crosses the membrane as a helical span at residues 273–292 (VMSLMYTMVTPMLNPFIYSL). Topologically, residues 293 to 314 (RNRDIKDALEKIMCKKQIPSFL) are cytoplasmic.

Belongs to the G-protein coupled receptor 1 family. Olfactory epithelium.

It is found in the cell membrane. Functionally, odorant receptor. This chain is Olfactory receptor-like protein I9, found in Rattus norvegicus (Rat).